The chain runs to 342 residues: MITLEQVTKIYQAANGSVTAVDNVSLEIREGEIFGIIGYSGAGKSTLIRLLNGLEKPTSGRVVVAGRDMTRVKGRELRKARQEIGMIFQHFNLLWSRTVRENIAFPLEIAGVPKEERNKRVDELIELVGLSGREDAYPSQLSGGQKQRVGIARALANNPKVLLCDEATSALDPQTTDAILDLLVDINKRLGLTIVLITHEMHVIRKICDRVAVMESGRIVEQGEVLHVFRNPQQPITKRFVKQLIEPEETEEAISHLFGQYPSGLIAQLTFVGAAAGKPLITEVVRQFAVDVNILQGKISQTHQGAYGVLFVHLDGARDEIDRALDYIQRQQVAVEVIHDAR.

One can recognise an ABC transporter domain in the interval 2–241; sequence ITLEQVTKIY…PQQPITKRFV (240 aa). 38–45 lines the ATP pocket; it reads GYSGAGKS.

This sequence belongs to the ABC transporter superfamily. Methionine importer (TC 3.A.1.24) family. In terms of assembly, the complex is composed of two ATP-binding proteins (MetN), two transmembrane proteins (MetI) and a solute-binding protein (MetQ).

The protein resides in the cell membrane. It catalyses the reaction L-methionine(out) + ATP + H2O = L-methionine(in) + ADP + phosphate + H(+). It carries out the reaction D-methionine(out) + ATP + H2O = D-methionine(in) + ADP + phosphate + H(+). Its function is as follows. Part of the ABC transporter complex MetNIQ involved in methionine import. Responsible for energy coupling to the transport system. The sequence is that of Methionine import ATP-binding protein MetN from Geobacillus kaustophilus (strain HTA426).